A 585-amino-acid chain; its full sequence is UvrABC system protein C (585 aa).

The 76-residue stretch at 15 to 90 (AEPGVYQFLE…IKRHQPRYNV (76 aa)) folds into the GIY-YIG domain. The region spanning 198–233 (GILADPLRQEMQAAATAEEFERAANIRDRLAVIESF) is the UVR domain.

The protein belongs to the UvrC family. As to quaternary structure, interacts with UvrB in an incision complex.

The protein localises to the cytoplasm. The UvrABC repair system catalyzes the recognition and processing of DNA lesions. UvrC both incises the 5' and 3' sides of the lesion. The N-terminal half is responsible for the 3' incision and the C-terminal half is responsible for the 5' incision. This is UvrABC system protein C from Haloquadratum walsbyi (strain DSM 16790 / HBSQ001).